Here is a 369-residue protein sequence, read N- to C-terminus: 3-isopropylmalate dehydrogenase (369 aa).

76 to 89 (GPKWDRNPSHLRPE) contacts NAD(+). Substrate-binding residues include Arg96, Arg106, Arg134, and Asp223. Residues Asp223, Asp247, and Asp251 each contribute to the Mg(2+) site. Position 281-293 (281-293 (GSAPDIAGQNKAN)) interacts with NAD(+).

It belongs to the isocitrate and isopropylmalate dehydrogenases family. LeuB type 1 subfamily. Homodimer. Mg(2+) serves as cofactor. It depends on Mn(2+) as a cofactor.

The protein localises to the cytoplasm. It catalyses the reaction (2R,3S)-3-isopropylmalate + NAD(+) = 4-methyl-2-oxopentanoate + CO2 + NADH. The protein operates within amino-acid biosynthesis; L-leucine biosynthesis; L-leucine from 3-methyl-2-oxobutanoate: step 3/4. Functionally, catalyzes the oxidation of 3-carboxy-2-hydroxy-4-methylpentanoate (3-isopropylmalate) to 3-carboxy-4-methyl-2-oxopentanoate. The product decarboxylates to 4-methyl-2 oxopentanoate. The sequence is that of 3-isopropylmalate dehydrogenase (leuB) from Priestia megaterium (strain DSM 319 / IMG 1521) (Bacillus megaterium).